Reading from the N-terminus, the 116-residue chain is Ribosome-binding factor A (116 aa).

The protein belongs to the RbfA family. As to quaternary structure, monomer. Binds 30S ribosomal subunits, but not 50S ribosomal subunits or 70S ribosomes.

The protein localises to the cytoplasm. Functionally, one of several proteins that assist in the late maturation steps of the functional core of the 30S ribosomal subunit. Associates with free 30S ribosomal subunits (but not with 30S subunits that are part of 70S ribosomes or polysomes). Required for efficient processing of 16S rRNA. May interact with the 5'-terminal helix region of 16S rRNA. In Streptococcus pneumoniae (strain ATCC BAA-255 / R6), this protein is Ribosome-binding factor A.